The sequence spans 136 residues: NHL-repeat-containing protein 4 (136 aa).

2 NHL repeats span residues 48-91 (QPLG…FPRV) and 93-132 (PPICLQLEGLKRPLGMACAPQGQLVVADAGDNCIKLYQYL).

This Mus musculus (Mouse) protein is NHL-repeat-containing protein 4 (Nhlrc4).